Here is a 214-residue protein sequence, read N- to C-terminus: Ornithine decarboxylase antizyme 1 (214 aa).

It belongs to the ODC antizyme family. In terms of assembly, interacts with ODC1 and thereby sterically blocks ODC homodimerization.

Its function is as follows. Ornithine decarboxylase (ODC) antizyme protein that negatively regulates ODC activity and intracellular polyamine biosynthesis and uptake in response to increased intracellular polyamine levels. Binds to ODC monomers, inhibiting the assembly of the functional ODC homodimer, and targets the monomers for ubiquitin-independent proteolytic destruction by the 26S proteasome. The sequence is that of Ornithine decarboxylase antizyme 1 (oaz1a) from Danio rerio (Zebrafish).